A 220-amino-acid chain; its full sequence is Protein-L-isoaspartate O-methyltransferase (220 aa).

The active site involves Ser64.

This sequence belongs to the methyltransferase superfamily. L-isoaspartyl/D-aspartyl protein methyltransferase family.

It is found in the cytoplasm. It carries out the reaction [protein]-L-isoaspartate + S-adenosyl-L-methionine = [protein]-L-isoaspartate alpha-methyl ester + S-adenosyl-L-homocysteine. Its function is as follows. Catalyzes the methyl esterification of L-isoaspartyl residues in peptides and proteins that result from spontaneous decomposition of normal L-aspartyl and L-asparaginyl residues. It plays a role in the repair and/or degradation of damaged proteins. This is Protein-L-isoaspartate O-methyltransferase from Methanoculleus marisnigri (strain ATCC 35101 / DSM 1498 / JR1).